Consider the following 229-residue polypeptide: MDNKGWSLKGSLLFLLLLLSDLLLCKSVASLPICPSGAVNCQVSLRDLFDRAVILSHYIHNLSSEMFNEFDKRYAQGRGFITKAINSCHTSSLPTPEDKEQAQQIHHEDLLNVILRVLRSWNDPLYHLVTEVRGLHEAPDAILSRAIEIEEQNRRLLEGMEKIVHQVHPGVRENEVYSVWSGLPSLQMADEDSRLFAFYNLLHCLRRDSHKIDSYLKLLKCRIVYDSNC.

Residues 1–30 form the signal peptide; sequence MDNKGWSLKGSLLFLLLLLSDLLLCKSVAS. A disulfide bridge links Cys-34 with Cys-41. Ser-56 bears the Phosphoserine mark. N-linked (GlcNAc...) asparagine glycosylation is present at Asn-61. Phosphoserine is present on residues Ser-64 and Ser-120. Cystine bridges form between Cys-88–Cys-204 and Cys-221–Cys-229.

It belongs to the somatotropin/prolactin family. In terms of assembly, interacts with PRLR.

It is found in the secreted. In terms of biological role, prolactin acts primarily on the mammary gland by promoting lactation. This chain is Prolactin (PRL), found in Felis catus (Cat).